The primary structure comprises 2477 residues: Non-reducing polyketide synthase mapC (2477 aa).

The N-terminal acylcarrier protein transacylase domain (SAT) stretch occupies residues 14–269 (LLFGPQCSEI…HQQTHREGIQ (256 aa)). The region spanning 403–820 (MPPIAITGMA…GSNAALIVRD (418 aa)) is the Ketosynthase family 3 (KS3) domain. Catalysis depends on for beta-ketoacyl synthase activity residues Cys-568, His-703, and His-742. Residues 930–1233 (LCFGGQNGVT…HRVNLDGSDG (304 aa)) form a malonyl-CoA:ACP transacylase (MAT) domain region. Ser-1017 functions as the For acyl/malonyl transferase activity in the catalytic mechanism. The segment at 1302–1435 (QERAGLLRKL…GSVSLCNERS (134 aa)) is N-terminal hotdog fold. Residues 1302–1612 (QERAGLLRKL…FMSVSIRSLT (311 aa)) enclose the PKS/mFAS DH domain. Residues 1307-1611 (LLRKLSDGPE…RFMSVSIRSL (305 aa)) form a product template (PT) domain region. The active-site Proton acceptor; for dehydratase activity is the His-1336. The interval 1461-1612 (ASNGLKGSTV…FMSVSIRSLT (152 aa)) is C-terminal hotdog fold. The active-site Proton donor; for dehydratase activity is the Asp-1518. The Carrier domain occupies 1651 to 1725 (DSDLVAVQEM…GLTEHIFPGH (75 aa)). Ser-1685 is subject to O-(pantetheine 4'-phosphoryl)serine. The interval 1882-2117 (PYALEHDLLQ…GFEWVGWTNN (236 aa)) is methyltransferase (CMeT) domain. Active-site for thioesterase activity residues include Ser-2267 and Asp-2421.

It is found in the cytoplasm. The protein resides in the cytosol. It catalyses the reaction 3 malonyl-CoA + acetyl-CoA + S-adenosyl-L-methionine + H(+) = 5-methylorsellinate + S-adenosyl-L-homocysteine + 3 CO2 + 4 CoA. The protein operates within secondary metabolite biosynthesis; terpenoid biosynthesis. Its function is as follows. Non-reducing polyketide synthase; part of the gene cluster that mediates the biosynthesis of mycophenolic acid (MPA), the first isolated antibiotic natural product in the world obtained from a culture of Penicillium brevicompactum in 1893. MpaC catalyzes the synthesis of 5-methylorsellinic acid (5MOA) via the condensation of 1 acetyl-CoA starter unit with 3 malonyl-CoA units and one methylation step. The first step of the pathway is the synthesis of 5-methylorsellinic acid (5MOA) by the cytosolic polyketide synthase mpaC. 5MOA is then converted to the phthalide compound 5,7-dihydroxy-4,6-dimethylphthalide (DHMP) by the endoplasmic reticulum-bound cytochrome P450 monooxygenase mpaDE. MpaDE first catalyzes hydroxylation of 5-MOA to 4,6-dihydroxy-2-(hydroxymethyl)-3-methylbenzoic acid (DHMB). MpaDE then acts as a lactone synthase that catalyzes the ring closure to convert DHMB into DHMP. The next step is the prenylation of DHMP by the Golgi apparatus-associated prenyltransferase mpaA to yield farnesyl-DHMP (FDHMP). The ER-bound oxygenase mpaB then mediates the oxidative cleavage the C19-C20 double bond in FDHMP to yield FDHMP-3C via a mycophenolic aldehyde intermediate. The O-methyltransferase mpaG catalyzes the methylation of FDHMP-3C to yield MFDHMP-3C. After the cytosolic methylation of FDHMP-3C, MFDHMP-3C enters into peroxisomes probably via free diffusion due to its low molecular weight. Upon a peroxisomal CoA ligation reaction, catalyzed by a beta-oxidation component enzyme acyl-CoA ligase ACL891, MFDHMP-3C-CoA would then be restricted to peroxisomes for the following beta-oxidation pathway steps. The peroxisomal beta-oxidation machinery than converts MFDHMP-3C-CoA into MPA_CoA, via a beta-oxidation chain-shortening process. Finally mpaH acts as a peroxisomal acyl-CoA hydrolase with high substrate specificity toward MPA-CoA to release the final product MPA. In Penicillium roqueforti (strain FM164), this protein is Non-reducing polyketide synthase mapC.